Reading from the N-terminus, the 371-residue chain is Cytochrome b (371 aa).

The next 4 membrane-spanning stretches (helical) occupy residues 25–45 (FGSM…FLAV), 69–90 (WMMQ…YIHI), 105–125 (WMSG…GYVL), and 170–190 (FFAL…LHVI). The heme b site is built by H75 and H89. Heme b-binding residues include H174 and H188. H193 lines the a ubiquinone pocket. 4 helical membrane-spanning segments follow: residues 218 to 238 (HKDL…VSFF), 280 to 300 (LGGA…PFTH), 312 to 332 (LSQL…WAAT), and 339 to 358 (FITI…LSIP).

The protein belongs to the cytochrome b family. The cytochrome bc1 complex contains 3 respiratory subunits (MT-CYB, CYC1 and UQCRFS1), 2 core proteins (UQCRC1 and UQCRC2) and probably 6 low-molecular weight proteins. Requires heme b as cofactor.

The protein resides in the mitochondrion inner membrane. Its function is as follows. Component of the ubiquinol-cytochrome c reductase complex (complex III or cytochrome b-c1 complex) that is part of the mitochondrial respiratory chain. The b-c1 complex mediates electron transfer from ubiquinol to cytochrome c. Contributes to the generation of a proton gradient across the mitochondrial membrane that is then used for ATP synthesis. This is Cytochrome b (MT-CYB) from Liasis mackloti savuensis (Savu python).